We begin with the raw amino-acid sequence, 379 residues long: Guanine nucleotide-binding protein subunit alpha-12 (379 aa).

A lipid anchor (S-palmitoyl cysteine) is attached at Cys11. In terms of domain architecture, G-alpha spans 54 to 379 (RLVKILLLGA…QENLKDIMLQ (326 aa)). Residues 57–70 (KILLLGAGESGKST) are G1 motif. Residues 65–70 (ESGKST) and 200–203 (LLAR) each bind GTP. Ser69 is a binding site for Mg(2+). The tract at residues 198–206 (DILLARKAT) is G2 motif. Thr206 is a Mg(2+) binding site. The residue at position 206 (Thr206) is a Phosphothreonine. Positions 221 to 230 (FKMVDVGGQR) are G3 motif. The segment at 290–297 (ILFLNKMD) is G4 motif. GTP contacts are provided by residues 294–297 (NKMD) and Ala351. The segment at 349 to 354 (TTAIDT) is G5 motif.

The protein belongs to the G-alpha family. G(12) subfamily. As to quaternary structure, g proteins are composed of 3 units; alpha, beta and gamma. The alpha chain contains the guanine nucleotide binding site. Interacts with UBXD5. Interacts (in GTP-bound form) with PPP5C (via TPR repeats); activates PPP5C phosphatase activity and translocates PPP5C to the cell membrane. Interacts with RGS22. Interacts (via N-terminus) with NAPA; the interaction promotes CDH5 localization to plasma membrane. Interacts with CTNND1 (via N-terminus); the interaction regulates CDH1-mediated cell-cell adhesion. Interacts with PPP2R1A; the interaction promotes protein phosphatase 2A activation causing dephosphorylation of MAPT. Interacts (in GTP-bound form) with ARHGEF1. Interacts (in GTP-bound form) with ARHGEF11 (via RGS domain). Interacts (in GTP-bound form) with ARHGEF12 (via RGS domain).

It is found in the cell membrane. It localises to the lateral cell membrane. Its subcellular location is the cytoplasm. Guanine nucleotide-binding proteins (G proteins) are involved as modulators or transducers in various transmembrane signaling systems. Activates effector molecule RhoA by binding and activating RhoGEFs (ARHGEF12/LARG). GNA12-dependent Rho signaling subsequently regulates transcription factor AP-1 (activating protein-1). GNA12-dependent Rho signaling also regulates protein phosphatese 2A activation causing dephosphorylation of its target proteins. Promotes tumor cell invasion and metastasis by activating RhoA/ROCK signaling pathway and up-regulating pro-inflammatory cytokine production. Inhibits CDH1-mediated cell adhesion in process independent from Rho activation. Together with NAPA promotes CDH5 localization to plasma membrane. May play a role in the control of cell migration through the TOR signaling cascade. This is Guanine nucleotide-binding protein subunit alpha-12 (Gna12) from Rattus norvegicus (Rat).